The sequence spans 1350 residues: ABC transporter G family member 45 (1350 aa).

A disordered region spans residues 1-23 (MAAAVELTGDGGTTAETRWLSPP). The ABC transporter 1 domain occupies 85-357 (AACAHMCTTR…FETMGFKCPS (273 aa)). An ATP-binding site is contributed by 118 to 125 (GAPGSGKT). Positions 434-647 (NIFKACFSRE…AQNAVALNEF (214 aa)) constitute an ABC transmembrane type-2 1 domain. A run of 6 helical transmembrane segments spans residues 453–473 (VHIF…TLFL), 491–511 (ALFM…AMTI), 523–543 (ILAL…LPIS), 557–577 (VIGY…LFAM), 597–617 (MANM…GFVI), and 683–703 (ICVS…IFAL). The ABC transporter 2 domain occupies 749–1001 (LVFDHINYFV…NMIKYFEAIP (253 aa)). 794 to 801 (GITGAGKT) contacts ATP. In terms of domain architecture, ABC transmembrane type-2 2 spans 1074–1288 (AQCMACLWKQ…TVYGLMFSQL (215 aa)). The next 7 membrane-spanning stretches (helical) occupy residues 1099–1119 (INTF…GSTI), 1126–1146 (FNIL…NCSI), 1181–1201 (LPYM…MIGF), 1208–1228 (FFWF…YGMM), 1238–1258 (IAAG…GFII), 1269–1289 (WVYW…SQLG), and 1322–1342 (LVTS…FLSI).

It belongs to the ABC transporter superfamily. ABCG family. PDR (TC 3.A.1.205) subfamily.

The protein resides in the membrane. May be a general defense protein. The polypeptide is ABC transporter G family member 45 (Oryza sativa subsp. japonica (Rice)).